We begin with the raw amino-acid sequence, 517 residues long: Serine hydroxymethyltransferase 2, mitochondrial (517 aa).

The transit peptide at 1–29 (MALALRRLSSSVKKPISLLSSNGGSLRFM) directs the protein to the mitochondrion. Position 82 (Ser82) interacts with L-serine. Residues Ser82, Tyr102, Glu104, Tyr112, 148–150 (SGS), and His177 each bind pemetrexed. 2 residues coordinate L-serine: Glu104 and Tyr112. Residue Glu104 coordinates methotrexate. Position 184–186 (184–186 (TDT)) interacts with methotrexate. Residues Ser232 and His260 each contribute to the pemetrexed site. L-serine-binding residues include His260 and Lys286. Lys286 is subject to N6-(pyridoxal phosphate)lysine. Gly331 provides a ligand contact to pemetrexed. Lys414 contacts methotrexate. Residue Arg430 participates in L-serine binding. Arg430 contributes to the pemetrexed binding site.

This sequence belongs to the SHMT family. Homotetramer. The cofactor is pyridoxal 5'-phosphate. As to expression, ubiquitous. Mainly expressed in the shoot apical meristem and roots. Also detected in the leaf vasculature, especially in the protoxylem and adjacent cell layers.

Its subcellular location is the mitochondrion. It carries out the reaction (6R)-5,10-methylene-5,6,7,8-tetrahydrofolate + glycine + H2O = (6S)-5,6,7,8-tetrahydrofolate + L-serine. Its pathway is one-carbon metabolism; tetrahydrofolate interconversion. Its activity is regulated as follows. Inhibited by the antifolate drugs methotrexate and pemetrexed. Functions outside the photorespiratory pathway in catalyzing the interconversion of serine and glycine with the conversion of tetrahydrofolate (THF) into 5,10-methylene-THF. This is Serine hydroxymethyltransferase 2, mitochondrial from Arabidopsis thaliana (Mouse-ear cress).